A 78-amino-acid polypeptide reads, in one-letter code: TP53-regulated inhibitor of apoptosis 1-A (78 aa).

Residues Met1–Ile52 adopt a coiled-coil conformation. One can recognise a CHCH domain in the interval Gly5–Lys55. Short sequence motifs (cx9C motif) lie at residues Cys8 to Cys18 and Cys37 to Cys47. 2 disulfide bridges follow: Cys8–Cys47 and Cys18–Cys37.

It belongs to the TRIAP1/MDM35 family. As to quaternary structure, monomer. Forms a complex with prelid1 in the mitochondrion intermembrane space. Interacts with prelid3a.

It localises to the mitochondrion. The protein resides in the mitochondrion intermembrane space. It catalyses the reaction a 1,2-diacyl-sn-glycero-3-phosphate(in) = a 1,2-diacyl-sn-glycero-3-phosphate(out). Its function is as follows. Involved in the modulation of the mitochondrial apoptotic pathway by ensuring the accumulation of cardiolipin (CL) in mitochondrial membranes. The triap1:prelid1 complex probably functions as a phosphatidic acid (PA) transporter across the mitochondrion intermembrane space to provide PA for cardiolipin CL synthesis in the inner membrane. Likewise, the triap1:prelid3a complex mediates the transfer of phosphatidic acid (PA) between liposomes (in vitro) and probably functions as a PA transporter across the mitochondrion intermembrane space (in vivo). Mediates cell survival by inhibiting activation of caspase-9 which prevents induction of apoptosis. Required for pronephros development; probably involved at an early stage in the formation of pronephric components derived from the somatic layer. The protein is TP53-regulated inhibitor of apoptosis 1-A (triap1-a) of Xenopus laevis (African clawed frog).